A 394-amino-acid chain; its full sequence is Elongation factor Tu-A (394 aa).

Positions 10–204 constitute a tr-type G domain; it reads KPHVNVGTIG…HLDTYIPEPQ (195 aa). A G1 region spans residues 19-26; the sequence is GHVDHGKT. 19 to 26 contacts GTP; that stretch reads GHVDHGKT. Threonine 26 contributes to the Mg(2+) binding site. Residues 60–64 are G2; the sequence is GITIN. The interval 81–84 is G3; the sequence is DCPG. Residues 81-85 and 136-139 each bind GTP; these read DCPGH and NKCD. The segment at 136–139 is G4; sequence NKCD. The interval 174–176 is G5; it reads SAL.

The protein belongs to the TRAFAC class translation factor GTPase superfamily. Classic translation factor GTPase family. EF-Tu/EF-1A subfamily. In terms of assembly, monomer.

It is found in the cytoplasm. It carries out the reaction GTP + H2O = GDP + phosphate + H(+). GTP hydrolase that promotes the GTP-dependent binding of aminoacyl-tRNA to the A-site of ribosomes during protein biosynthesis. The polypeptide is Elongation factor Tu-A (Pasteurella multocida (strain Pm70)).